Reading from the N-terminus, the 210-residue chain is Cdc42 effector protein 2 (210 aa).

S2 is subject to N-acetylserine. A CRIB domain is found at 30-44 (ISPPLGDFRHTIHIG). Phosphoserine is present on residues S31, S101, and S141. The segment at 124–145 (AQAPPKPPRLHLETPQASPQEA) is disordered.

Belongs to the BORG/CEP family. Interacts with CDC42 and RHOQ, in a GTP-dependent manner, and with SEPT7.

The protein resides in the endomembrane system. The protein localises to the cytoplasm. It localises to the cytoskeleton. Its function is as follows. Probably involved in the organization of the actin cytoskeleton. May act downstream of CDC42 to induce actin filament assembly leading to cell shape changes. Induces pseudopodia formation in fibroblasts in a CDC42-dependent manner. The polypeptide is Cdc42 effector protein 2 (CDC42EP2) (Bos taurus (Bovine)).